The chain runs to 272 residues: Ribonuclease 3 (272 aa).

The disordered stretch occupies residues 1–22 (MSLQFLRSEASDGAGETSDASS). An RNase III domain is found at 31–162 (TATHLARLTG…LVGAIYLDQG (132 aa)). E75 provides a ligand contact to Mg(2+). The active site involves D79. Mg(2+)-binding residues include D148 and E151. The active site involves E151. In terms of domain architecture, DRBM spans 189–258 (NYKSRLIEYT…AKEAMKRLES (70 aa)).

The protein belongs to the ribonuclease III family. In terms of assembly, homodimer. It depends on Mg(2+) as a cofactor.

It is found in the cytoplasm. It carries out the reaction Endonucleolytic cleavage to 5'-phosphomonoester.. In terms of biological role, digests double-stranded RNA. Involved in the processing of primary rRNA transcript to yield the immediate precursors to the large and small rRNAs (23S and 16S). Processes some mRNAs, and tRNAs when they are encoded in the rRNA operon. Processes pre-crRNA and tracrRNA of type II CRISPR loci if present in the organism. The protein is Ribonuclease 3 of Chlorobaculum tepidum (strain ATCC 49652 / DSM 12025 / NBRC 103806 / TLS) (Chlorobium tepidum).